Consider the following 314-residue polypeptide: Melanoma-associated antigen 6 (314 aa).

Residues 1 to 20 (MPLEQRSQHCKPEEGLEARG) show a composition bias toward basic and acidic residues. Residues 1-99 (MPLEQRSQHC…QEEEGPSTFP (99 aa)) form a disordered region. Residues 21-44 (EALGLVGAQAPATEEQEAASSSST) show a composition bias toward low complexity. Residues 65 to 87 (PQGASSLPTTMNYPLWSQSYEDS) show a composition bias toward polar residues. An MAGE domain is found at 109 to 308 (LSRKVAKLVH…ISYPLLHEWA (200 aa)).

Interacts with TRIM28. In terms of processing, ubiquitinated by the DCX(DCAF12) complex specifically recognizes the diglutamate (Glu-Glu) at the C-terminus, leading to its degradation. As to expression, expressed in many tumors of several types, such as melanoma, head and neck squamous cell carcinoma, lung carcinoma and breast carcinoma, but not in normal tissues except for testes.

Activator of ubiquitin ligase activity of RING-type zinc finger-containing E3 ubiquitin-protein ligases that acts as a repressor of autophagy. May enhance ubiquitin ligase activity of TRIM28 and stimulate p53/TP53 ubiquitination by TRIM28. Proposed to act through recruitment and/or stabilization of the Ubl-conjugating enzyme (E2) at the E3:substrate complex. May play a role in tumor transformation or aspects of tumor progression. In vitro promotes cell viability in melanoma cell lines. The sequence is that of Melanoma-associated antigen 6 from Homo sapiens (Human).